The following is a 365-amino-acid chain: MNILKISKQTLRNNIKIIREYIGNAKMCFPVKANAYGHGIEDIVENTHDLVDFFAVANSLEAFRVTAVAKNPVLVFGVIYYEYIEKMISENIRVSIQDYEDIEKLEQIAKELDKKVYAHININTGMNRMGVDYNDACRTIQRAYESDWLILEGVYSHLACADNRDHPTNIKQKNRFDSIVKFTKGLSQDIICHLSNSYGFLGQKGICYDMVRPGILSYGFLPEFYVDRVIREIKPIARLLSKVVKIITLQEGEGVGYSLIYRGFEGEQLAVIPIGYGDGFPRELGDRGFVNINDVMYPMAGRMSMDSLTVSLGINEYDVKVGDTVELISAIPRNRNSAFSIAKQTNTIEYDIMSTLNDRIIRKII.

K32 (proton acceptor; specific for D-alanine) is an active-site residue. K32 carries the post-translational modification N6-(pyridoxal phosphate)lysine. R128 contacts substrate. Y257 (proton acceptor; specific for L-alanine) is an active-site residue. M305 is a binding site for substrate.

The protein belongs to the alanine racemase family. The cofactor is pyridoxal 5'-phosphate.

The catalysed reaction is L-alanine = D-alanine. The protein operates within amino-acid biosynthesis; D-alanine biosynthesis; D-alanine from L-alanine: step 1/1. Its function is as follows. Catalyzes the interconversion of L-alanine and D-alanine. May also act on other amino acids. The protein is Alanine racemase (alr) of Francisella tularensis subsp. tularensis (strain WY96-3418).